A 181-amino-acid chain; its full sequence is MKKCLLFLTTIALILSLSTNAFAKNTSGDLSQKQALQLALSAREHFWNTMSGHNPKVKKAVCPSGTFEYQNLQYVYMCSDLGTKAKAVNYLTPIFTKTAIEKGFKDYHFTVSKGKLAVPIGDGDNLLNWKKSTAKLISKKGSTITYEFTVPTLDGSPSAKRKVTFVKENKKWKVNQFDAVI.

The first 23 residues, 1-23 (MKKCLLFLTTIALILSLSTNAFA), serve as a signal peptide directing secretion.

This is an uncharacterized protein from Bacillus subtilis (strain 168).